Here is a 567-residue protein sequence, read N- to C-terminus: Potassium-transporting ATPase potassium-binding subunit (567 aa).

12 consecutive transmembrane segments (helical) span residues 5-25 (GWLQILIYIGILLLLVKPLGG), 64-84 (TTYSISMLLFSLAGFLMLYFL), 136-156 (GFTVQNFVSAATGIALAIALI), 179-199 (LYVLLPACIVMTLVFVYLGVP), 254-274 (ISNLIQMLAIFAIGAALTNVF), 285-305 (WAILAAMGTLFIAGVIVTYWA), 328-350 (VRFGITMSSLFAVITTAASCGAV), 375-395 (IVGGVGAGFYGILMFVIIAIF), 421-441 (MLAVLCLPAGMLIFTAISVVL), 459-481 (ILYAYSSAAANNGSAFAGLSANT), 486-506 (ITLGVVMLIGRFLVIVPALAI), and 529-549 (LFVGLLVGTILIVGGLTFFPA).

Belongs to the KdpA family. The system is composed of three essential subunits: KdpA, KdpB and KdpC.

The protein resides in the cell inner membrane. In terms of biological role, part of the high-affinity ATP-driven potassium transport (or Kdp) system, which catalyzes the hydrolysis of ATP coupled with the electrogenic transport of potassium into the cytoplasm. This subunit binds the periplasmic potassium ions and delivers the ions to the membrane domain of KdpB through an intramembrane tunnel. This chain is Potassium-transporting ATPase potassium-binding subunit, found in Rhizobium rhizogenes (strain K84 / ATCC BAA-868) (Agrobacterium radiobacter).